Consider the following 268-residue polypeptide: Tryptophan synthase alpha chain (268 aa).

Catalysis depends on proton acceptor residues E49 and D60.

Belongs to the TrpA family. In terms of assembly, tetramer of two alpha and two beta chains.

It catalyses the reaction (1S,2R)-1-C-(indol-3-yl)glycerol 3-phosphate + L-serine = D-glyceraldehyde 3-phosphate + L-tryptophan + H2O. The protein operates within amino-acid biosynthesis; L-tryptophan biosynthesis; L-tryptophan from chorismate: step 5/5. In terms of biological role, the alpha subunit is responsible for the aldol cleavage of indoleglycerol phosphate to indole and glyceraldehyde 3-phosphate. The protein is Tryptophan synthase alpha chain of Escherichia coli O139:H28 (strain E24377A / ETEC).